We begin with the raw amino-acid sequence, 119 residues long: Large ribosomal subunit protein uL18 (119 aa).

The interval 1-22 (MGHVEKVARRHKIKTRSKARGQ) is disordered. Residues 8 to 19 (ARRHKIKTRSKA) show a composition bias toward basic residues.

The protein belongs to the universal ribosomal protein uL18 family. Part of the 50S ribosomal subunit; part of the 5S rRNA/L5/L18/L25 subcomplex. Contacts the 5S and 23S rRNAs.

Its function is as follows. This is one of the proteins that bind and probably mediate the attachment of the 5S RNA into the large ribosomal subunit, where it forms part of the central protuberance. The sequence is that of Large ribosomal subunit protein uL18 from Chlorobium phaeobacteroides (strain BS1).